A 164-amino-acid polypeptide reads, in one-letter code: General odorant-binding protein 1 (164 aa).

The N-terminal stretch at 1-19 (MPGVLRALLLLAAAAPLLA) is a signal peptide. 3 disulfide bridges follow: C38/C73, C69/C127, and C116/C136.

It belongs to the PBP/GOBP family. In terms of tissue distribution, antenna.

Its function is as follows. Present in the aqueous fluid surrounding olfactory sensory dendrites and are thought to aid in the capture and transport of hydrophobic odorants into and through this fluid. The sequence is that of General odorant-binding protein 1 from Heliothis virescens (Tobacco budworm moth).